The sequence spans 209 residues: Small ribosomal subunit protein uS3 (209 aa).

Residues 38-107 (IRKVVKNAYS…RVIVNVEEIK (70 aa)) enclose the KH type-2 domain.

Belongs to the universal ribosomal protein uS3 family. Part of the 30S ribosomal subunit. Forms a tight complex with proteins S10 and S14.

In terms of biological role, binds the lower part of the 30S subunit head. Binds mRNA in the 70S ribosome, positioning it for translation. In Pseudothermotoga lettingae (strain ATCC BAA-301 / DSM 14385 / NBRC 107922 / TMO) (Thermotoga lettingae), this protein is Small ribosomal subunit protein uS3.